The primary structure comprises 273 residues: Nickel permease LarQ (273 aa).

5 consecutive transmembrane segments (helical) span residues 64-84 (LIQLLLLVILIALSNNLILLW), 117-137 (MLFVLPSYWLAGPTTLLFFGL), 159-179 (LAGLKALHCPDLLIMTLAIAI), 210-230 (LIGALFGNLYLKSYTYALELY), and 251-271 (HWRDYLALSPAIIVWILFIFW).

It belongs to the CbiQ family. May form an energy-coupling factor (ECF) transporter complex composed of an ATP-binding protein (A component, LarO), a transmembrane protein (T component, LarQ) and a fused possible substrate-capture protein (S component, LarMN) of unknown stoichiometry.

It localises to the cell membrane. Probable transmembrane component of the energy-coupling factor (ECF) transporter complex LarMNQO involved in nickel import. This Lactiplantibacillus plantarum (strain ATCC BAA-793 / NCIMB 8826 / WCFS1) (Lactobacillus plantarum) protein is Nickel permease LarQ.